The following is a 267-amino-acid chain: 2-keto-3-deoxy-L-rhamnonate aldolase (267 aa).

Residue His-49 is the Proton acceptor of the active site. Residue Gln-151 coordinates substrate. Residue Glu-153 coordinates Mg(2+). Residues Ala-178 and Asp-179 each coordinate substrate. A Mg(2+)-binding site is contributed by Asp-179.

The protein belongs to the HpcH/HpaI aldolase family. KDR aldolase subfamily. In terms of assembly, homohexamer. Requires Mg(2+) as cofactor.

The catalysed reaction is 2-dehydro-3-deoxy-L-rhamnonate = (S)-lactaldehyde + pyruvate. Functionally, catalyzes the reversible retro-aldol cleavage of 2-keto-3-deoxy-L-rhamnonate (KDR) to pyruvate and lactaldehyde. This Salmonella dublin (strain CT_02021853) protein is 2-keto-3-deoxy-L-rhamnonate aldolase.